The chain runs to 270 residues: Phosphate import ATP-binding protein PstB 1 (270 aa).

The ABC transporter domain maps to 24–265 (LAVERLNLFY…PYQRQTEDYI (242 aa)). 56-63 (GPSGCGKS) lines the ATP pocket.

Belongs to the ABC transporter superfamily. Phosphate importer (TC 3.A.1.7) family. In terms of assembly, the complex is composed of two ATP-binding proteins (PstB), two transmembrane proteins (PstC and PstA) and a solute-binding protein (PstS).

It is found in the cell inner membrane. The enzyme catalyses phosphate(out) + ATP + H2O = ADP + 2 phosphate(in) + H(+). Functionally, part of the ABC transporter complex PstSACB involved in phosphate import. Responsible for energy coupling to the transport system. The polypeptide is Phosphate import ATP-binding protein PstB 1 (Yersinia pestis bv. Antiqua (strain Antiqua)).